The primary structure comprises 688 residues: DNA topoisomerase 1 (688 aa).

Positions 3–113 (ENLVIVESPA…TENRVVFNEI (111 aa)) constitute a Toprim domain. Glutamate 9 and aspartate 82 together coordinate Mg(2+). Residues 129–556 (EMELVDAQQA…FYSSFKQDVE (428 aa)) enclose the Topo IA-type catalytic domain. Residues 163–168 (SAGRVQ) form an interaction with DNA region. The O-(5'-phospho-DNA)-tyrosine intermediate role is filled by tyrosine 298. The segment at 322–349 (YGNDYTSNRKSKGQGDQDAHEAIRPSST) is disordered. Basic and acidic residues predominate over residues 334 to 344 (GQGDQDAHEAI). 3 C4-type zinc fingers span residues 576-602 (CEVCGSPMVIKMGRYGKFMACSNFPDC), 616-644 (CPKCKEGDVVERKSKKNRIFYGCSKYPEC), and 657-680 (CPKCEHYLVEKKQGRKSQVVCSNC).

This sequence belongs to the type IA topoisomerase family. Monomer. Mg(2+) serves as cofactor.

The enzyme catalyses ATP-independent breakage of single-stranded DNA, followed by passage and rejoining.. In terms of biological role, releases the supercoiling and torsional tension of DNA, which is introduced during the DNA replication and transcription, by transiently cleaving and rejoining one strand of the DNA duplex. Introduces a single-strand break via transesterification at a target site in duplex DNA. The scissile phosphodiester is attacked by the catalytic tyrosine of the enzyme, resulting in the formation of a DNA-(5'-phosphotyrosyl)-enzyme intermediate and the expulsion of a 3'-OH DNA strand. The free DNA strand then undergoes passage around the unbroken strand, thus removing DNA supercoils. Finally, in the religation step, the DNA 3'-OH attacks the covalent intermediate to expel the active-site tyrosine and restore the DNA phosphodiester backbone. In Staphylococcus saprophyticus subsp. saprophyticus (strain ATCC 15305 / DSM 20229 / NCIMB 8711 / NCTC 7292 / S-41), this protein is DNA topoisomerase 1.